The chain runs to 318 residues: MSPQPHIPVLLAEVIAALAPRNDGVYLDGTFGAGGYSRAILAASACRVWAIDRDPTAVARGKLLEEGSAGRFSMIEGRFGDMDSLLRQQGVNQVDGIALDIGVSSMQIDQPERGFSFAKDGPLDMRMETKGPSAADMVNDTPETELANIIYRYGEERLSRRVAKAIVEARRLKRFERTGELAEVVRKVVPRSGDGIDPATRTFQALRIAVNDELGELERGLEAAERLLAPGGHLAVVTFHSLEDRVVKSFLKARSGEAARPSRHVPQAQGSGPAASFALLSRKAIGPAPDEARANPRARSAKLRAAARTAAPAWETVS.

Residues 34–36, Asp52, Phe79, Asp100, and Gln107 contribute to the S-adenosyl-L-methionine site; that span reads GGY. The tract at residues 286–318 is disordered; sequence GPAPDEARANPRARSAKLRAAARTAAPAWETVS. Positions 303–318 are enriched in low complexity; the sequence is LRAAARTAAPAWETVS.

The protein belongs to the methyltransferase superfamily. RsmH family.

The protein resides in the cytoplasm. It carries out the reaction cytidine(1402) in 16S rRNA + S-adenosyl-L-methionine = N(4)-methylcytidine(1402) in 16S rRNA + S-adenosyl-L-homocysteine + H(+). In terms of biological role, specifically methylates the N4 position of cytidine in position 1402 (C1402) of 16S rRNA. In Paramagnetospirillum magneticum (strain ATCC 700264 / AMB-1) (Magnetospirillum magneticum), this protein is Ribosomal RNA small subunit methyltransferase H.